Reading from the N-terminus, the 536-residue chain is Maintenance of mitochondrial morphology protein 1 (536 aa).

Residues 1–25 (MAGPSNQTQPPPPVLTQPSLSFTQG) lie on the Lumenal side of the membrane. A helical transmembrane segment spans residues 26 to 46 (LLVGQLSVVLLIGAFIKFFIF). Residues 47 to 536 (GEAPPHPSRN…GSMPDPVVVT (490 aa)) lie on the Cytoplasmic side of the membrane. Disordered regions lie at residues 52–135 (HPSR…SHQP), 275–331 (GPGT…ATAA), 416–467 (GRTG…GGSM), and 505–536 (YGGAQGGGGGGGRGGEEQFAIPGSMPDPVVVT). 3 stretches are compositionally biased toward polar residues: residues 69–81 (YSLNSISADSSPR), 88–105 (STSNILRPVPSSSTNTRS), and 112–121 (YSATPTNPTS). The span at 122–132 (KHSRSRPHHSS) shows a compositional bias: basic residues. Residues 134-409 (QPESLDWFNV…EPRVQVVGLP (276 aa)) enclose the SMP-LTD domain. Residues 321-331 (TNTNTAGATAA) are compositionally biased toward low complexity. Gly residues-rich tracts occupy residues 442–467 (TAGGDGVGVRGGGGGGGVGGSGGGSM) and 507–517 (GAQGGGGGGGR).

The protein belongs to the MMM1 family. In terms of assembly, homodimer. Component of the ER-mitochondria encounter structure (ERMES) or MDM complex, composed of MMM1, MDM10, MDM12 and MDM34. An MMM1 homodimer associates with one molecule of MDM12 on each side in a pairwise head-to-tail manner, and the SMP-LTD domains of MMM1 and MDM12 generate a continuous hydrophobic tunnel for phospholipid trafficking.

It is found in the endoplasmic reticulum membrane. Functionally, component of the ERMES/MDM complex, which serves as a molecular tether to connect the endoplasmic reticulum (ER) and mitochondria. Components of this complex are involved in the control of mitochondrial shape and protein biogenesis, and function in nonvesicular lipid trafficking between the ER and mitochondria. The MDM12-MMM1 subcomplex functions in the major beta-barrel assembly pathway that is responsible for biogenesis of all outer membrane beta-barrel proteins, and acts in a late step after the SAM complex. The MDM10-MDM12-MMM1 subcomplex further acts in the TOM40-specific pathway after the action of the MDM12-MMM1 complex. Essential for establishing and maintaining the structure of mitochondria and maintenance of mtDNA nucleoids. The sequence is that of Maintenance of mitochondrial morphology protein 1 from Ajellomyces dermatitidis (strain ER-3 / ATCC MYA-2586) (Blastomyces dermatitidis).